The primary structure comprises 424 residues: Hydrolase ORFZ (424 aa).

Serine 243 functions as the Nucleophile in the catalytic mechanism.

The protein belongs to the AB hydrolase superfamily. FUS2 hydrolase family. As to quaternary structure, homodimer.

It participates in secondary metabolite biosynthesis. In terms of biological role, hydrolyase; part of the gene cluster that mediates the biosynthesis of a tyrosine-derived cytochalasan acting as a fungal signal recognized by resistant rice plants and leads to avirulence in Pi33 resistant rice cultivars. The first step in the pathway is catalyzed by the hybrid PKS-NRPS ACE1, assisted by the enoyl reductase RAP1, that are responsible for fusion of the tyrosine precursor and the polyketide backbone. The polyketide synthase module (PKS) of ACE1 is responsible for the synthesis of the polyketide backbone and the downstream nonribosomal peptide synthetase (NRPS) amidates the carboxyl end of the polyketide with the tyrosine precursor. Because ACE1 lacks a designated enoylreductase (ER) domain, the required activity is provided the enoyl reductase RAP1. Reduction by the hydrolyase ORFZ, followed by dehydration and intra-molecular Diels-Alder cyclization by the Diels-Alderase ORF3 then yield the required isoindolone-fused macrocycle. A number of oxidative steps catalyzed by the tailoring enzymes identified within the cluster, including cytochrome P450 monooxygenases CYP1 to CYP4, the FAD-linked oxidoreductase OXR2 and the short-chain dehydrogenase/reductase OXR1, are further required to afford the final cytochalasans that confer avirulence and which have still to be identified. The monooxygenase CYP1 has been shown to be a site-selective C-18 hydroxylase whereas the function of CYP3 is the site-selective epoxidation of the C-6/C-7 olefin that is present in some intermediate compounds. Finally, SYN2 and RAP2 are not required for avirulence in Pi33 resistant rice cultivars. In Pyricularia oryzae (strain 70-15 / ATCC MYA-4617 / FGSC 8958) (Rice blast fungus), this protein is Hydrolase ORFZ.